The primary structure comprises 71 residues: U3-agatoxin-Ao1a (71 aa).

The signal sequence occupies residues 1–20 (MKAVIFFCLLSVMVFTVIEA). A propeptide spanning residues 21–33 (VKEEGTKPAEAAR) is cleaved from the precursor. Disulfide bonds link C35–C51, C42–C56, C50–C66, and C58–C64. S70 carries the serine amide modification.

It belongs to the neurotoxin 07 (Beta/delta-agtx) family. 01 (aga-2) subfamily. As to expression, expressed by the venom gland.

It localises to the secreted. Its function is as follows. Insecticidal neurotoxin that modulates the insect Nav channel (DmNaV1/tipE (para/tipE)) in a unique manner, with both the activation and inactivation processes being affected. The voltage dependence of activation is shifted toward more hyperpolarized potentials (analogous to site 4 toxins) and a non-inactivating persistent sodium current is induced (site 3-like action). Interestingly, both effects take place in a voltage-dependent manner, producing a bell-shaped curve between -80 and 0 mV. Compared to beta/delta-agatoxin-1 to -3, this toxin appears to affect the insect sodium channel only weakly. The protein is U3-agatoxin-Ao1a of Agelena orientalis (Funnel-web spider).